We begin with the raw amino-acid sequence, 355 residues long: Protein ATP1B4 (355 aa).

The Nuclear segment spans residues 1–108 (MRRQLRSRRA…SLARTGQSWS (108 aa)). The tract at residues 33–77 (ADEEEEAEEEARVMVVPDLEEEEEEEEEKEEEEKEEEDSHSQETD) is disordered. A compositionally biased stretch (acidic residues) spans 50 to 68 (DLEEEEEEEEEKEEEEKEE). The helical; Signal-anchor for type II membrane protein transmembrane segment at 109–129 (LILVIYFFFYASLAAVITLCM) threads the bilayer. Over 130-355 (YTLFLTISPY…RVIFTLNIET (226 aa)) the chain is Perinuclear space.

The protein belongs to the X(+)/potassium ATPases subunit beta family. In terms of assembly, associates with a SMAD7-transcriptional complex. Interacts with SNW1 and TOR1AIP1. Does not associate with known Na,K-ATPase alpha-subunits.

Its subcellular location is the nucleus inner membrane. Functionally, may act as a transcriptional coregulator during muscle development through its interaction with SNW1. Has lost its ancestral function as a Na,K-ATPase beta-subunit. The protein is Protein ATP1B4 (ATP1B4) of Bos taurus (Bovine).